Consider the following 344-residue polypeptide: RNA-binding protein squid (344 aa).

Residues 1–55 (MAENKQVDTEINGEDFTKDVTADGPGSENGDAGAAGSTNGSSDNQSAASGQRDDD) are disordered. The span at 36 to 49 (GSTNGSSDNQSAAS) shows a compositional bias: polar residues. 2 RRM domains span residues 56–138 (RKLF…HGKI) and 136–213 (GKIF…RATP). The residue at position 148 (S148) is a Phosphoserine. Disordered stretches follow at residues 214-238 (KPENQMMGGMRGGPRGGMRGGRGGY) and 301-344 (GGGG…HQPY). The tract at residues 215–254 (PENQMMGGMRGGPRGGMRGGRGGYGGRGGYNNQWDGQGSY) is M9-like motif. Gly residues-rich tracts occupy residues 222 to 238 (GMRGGPRGGMRGGRGGY) and 301 to 337 (GGGGGNMGGGRGGPRGGGGPKGGGGFNGGKQRGGGGR). The M9 motif stretch occupies residues 300-338 (GGGGGGNMGGGRGGPRGGGGPKGGGGFNGGKQRGGGGRQ).

As to quaternary structure, interacts with bru1/Bruno; the interaction is direct but weak, and may play a role in regulation of grk mRNA localization and translation. Interacts (probably via M9 and M9-like motifs) with Tnpo/Transportin; the interaction is direct and is involved in nuclear localization. Interacts with fs(1)K10 (via N-terminus); may be involved in localization of sqd in the oocyte during oogenesis. In terms of assembly, interacts (via C-terminus) with Hrb27C; the interaction is RNA dependent. Does not interact with Tnpo/Transportin. Interacts with fs(1)K10 (via N-terminus); may be involved in localization of sqd in the oocyte during oogenesis. As to quaternary structure, interacts (probably via M9-like motif) with Tnpo/Transportin; the interaction is direct and is involved in nuclear localization. Interacts with fs(1)K10 (via N-terminus); may be involved in localization of sqd in the oocyte during oogenesis.

The protein resides in the nucleus. The protein localises to the cytoplasm. Its function is as follows. Component of ribonucleosomes. Could be needed to organize a concentration gradient of a dorsalizing morphogen (Dm) originating in the germinal vesicle. At least one of the isoforms is essential in somatic tissues. Interacts with grk mRNA (via 3' UTR) and involved in its localization to the dorsal anterior region of the oocyte during dorsal-ventral axis determination; may function as a ribonuclear protein complex together with otu and Hrb27C. Required for polytene chromosome dispersal in nurse cells during oogenesis; nuclear isoforms play a greater role in this than cytoplasmic isoforms. In terms of biological role, required nonredundantly with isoform A/sqdA for dorsoventral pattern determination during oogenesis. May be important in somatic tissues. Required nonredundantly with isoform B/SqdS for dorsoventral pattern determination during oogenesis. Functionally, may lack a role in dorsoventral pattern determination during oogenesis. May be important in somatic tissues. This chain is RNA-binding protein squid, found in Drosophila melanogaster (Fruit fly).